A 347-amino-acid chain; its full sequence is UDP-3-O-acylglucosamine N-acyltransferase (347 aa).

The Proton acceptor role is filled by His248.

This sequence belongs to the transferase hexapeptide repeat family. LpxD subfamily. Homotrimer.

It carries out the reaction a UDP-3-O-[(3R)-3-hydroxyacyl]-alpha-D-glucosamine + a (3R)-hydroxyacyl-[ACP] = a UDP-2-N,3-O-bis[(3R)-3-hydroxyacyl]-alpha-D-glucosamine + holo-[ACP] + H(+). It functions in the pathway bacterial outer membrane biogenesis; LPS lipid A biosynthesis. Catalyzes the N-acylation of UDP-3-O-acylglucosamine using 3-hydroxyacyl-ACP as the acyl donor. Is involved in the biosynthesis of lipid A, a phosphorylated glycolipid that anchors the lipopolysaccharide to the outer membrane of the cell. The protein is UDP-3-O-acylglucosamine N-acyltransferase of Parasynechococcus marenigrum (strain WH8102).